The chain runs to 28 residues: fur leader peptide (28 aa).

Cotranscribed with fur, it is essential for fur translation. The fur ribosomal binding site (RBS) is occluded by the 5'-mRNA secondary structure, which is opened by uof translation. This chain is fur leader peptide (uof), found in Escherichia coli (strain K12).